Consider the following 434-residue polypeptide: 3-isopropylmalate dehydratase large subunit 1 (434 aa).

Residues Cys308, Cys368, and Cys371 each contribute to the [4Fe-4S] cluster site.

Belongs to the aconitase/IPM isomerase family. LeuC type 2 subfamily. Heterodimer of LeuC and LeuD. It depends on [4Fe-4S] cluster as a cofactor.

It carries out the reaction (2R,3S)-3-isopropylmalate = (2S)-2-isopropylmalate. Its pathway is amino-acid biosynthesis; L-leucine biosynthesis; L-leucine from 3-methyl-2-oxobutanoate: step 2/4. Its function is as follows. Catalyzes the isomerization between 2-isopropylmalate and 3-isopropylmalate, via the formation of 2-isopropylmaleate. This Deinococcus radiodurans (strain ATCC 13939 / DSM 20539 / JCM 16871 / CCUG 27074 / LMG 4051 / NBRC 15346 / NCIMB 9279 / VKM B-1422 / R1) protein is 3-isopropylmalate dehydratase large subunit 1.